Reading from the N-terminus, the 198-residue chain is Probable GTP-binding protein EngB (198 aa).

The EngB-type G domain occupies 22-195 (DLPEIALAGR…WKAIHKMTKT (174 aa)). Residues 30-37 (GRSNVGKS), 57-61 (GKTQT), 75-78 (DVPG), 142-145 (TKAD), and 174-176 (FSS) each bind GTP. Positions 37 and 59 each coordinate Mg(2+).

The protein belongs to the TRAFAC class TrmE-Era-EngA-EngB-Septin-like GTPase superfamily. EngB GTPase family. The cofactor is Mg(2+).

Necessary for normal cell division and for the maintenance of normal septation. The sequence is that of Probable GTP-binding protein EngB from Bacillus cereus (strain G9842).